Reading from the N-terminus, the 350-residue chain is Eukaryotic translation initiation factor 3 subunit I (350 aa).

6 WD repeats span residues 8–49, 51–89, 91–135, 149–190, 198–240, and 296–335; these read GHER…GTLE, HQGV…CVYT, NSPS…ASLT, QNGS…KSLQ, EKNV…KVYK, and GHFG…KDFL.

It belongs to the eIF-3 subunit I family. In terms of assembly, component of the eukaryotic translation initiation factor 3 (eIF-3) complex.

Its subcellular location is the cytoplasm. Functionally, component of the eukaryotic translation initiation factor 3 (eIF-3) complex, which is involved in protein synthesis of a specialized repertoire of mRNAs and, together with other initiation factors, stimulates binding of mRNA and methionyl-tRNAi to the 40S ribosome. The eIF-3 complex specifically targets and initiates translation of a subset of mRNAs involved in cell proliferation. This chain is Eukaryotic translation initiation factor 3 subunit I, found in Lodderomyces elongisporus (strain ATCC 11503 / CBS 2605 / JCM 1781 / NBRC 1676 / NRRL YB-4239) (Yeast).